A 497-amino-acid chain; its full sequence is MEMILMVSLCLTTLITLFLLKQFLKRTANKVNLPPSPWRLPLIGNLHQLSLHPHRSLHSLSLRYGPLMLLHFGRVPILVVSSGEAAQEVLKTHDLKFANRPRSKAVHGLMNGGRDVVFGPYGEYWRQMKSVCILNLLTNKMVASFEKIREEELNEMIKKLEKASSSSSSENLSELFVTLPSDVTSRIALGRKHSEDETARDLKKRVRQIMELLGEFPIGDYVPALAWIDRINGFNARIKEVSQGFSDLMDKVVQEHLEAGNHKEDFVDILLSIESEKSIGFQAQRDDIKFMILDMFIGGTSTSSTLLEWIMTELIRNPNVMKKLQDEIRSTIRPHGSYIKEKDVENMKYLKAVIKEVFRVHPPLPLILPRLLSEDVKVKGYNIAAGTEVIINAWAIQRDPAIWGPDAEEFKPERHLDSTLDYHGKDLNFIPFGSGRRICPGINLALGLVEVTVANLVGRFDWRAEAGPNGDQPDLTEAFGLDVCRKFPLIAFPSSVI.

A helical membrane pass occupies residues 4–24 (ILMVSLCLTTLITLFLLKQFL). C439 provides a ligand contact to heme.

It belongs to the cytochrome P450 family. Heme is required as a cofactor.

It localises to the membrane. Functionally, converts indole-3-acetaldoxime to indole cyanohydrin. Involved in the biosynthetic pathway to 4-hydroxyindole-3-carbonyl nitrile (4-OH-ICN), a cyanogenic metabolite required for inducible pathogen defense. The protein is Cytochrome P450 71A12 (CYP71A12) of Arabidopsis thaliana (Mouse-ear cress).